Here is a 221-residue protein sequence, read N- to C-terminus: Enolase-phosphatase E1 (221 aa).

Residues aspartate 9 and glutamate 11 each contribute to the Mg(2+) site. Substrate contacts are provided by residues 116–117 (SS) and lysine 152. A Mg(2+)-binding site is contributed by aspartate 180.

This sequence belongs to the HAD-like hydrolase superfamily. MasA/MtnC family. In terms of assembly, monomer. It depends on Mg(2+) as a cofactor.

It is found in the cytoplasm. It localises to the nucleus. The catalysed reaction is 5-methylsulfanyl-2,3-dioxopentyl phosphate + H2O = 1,2-dihydroxy-5-(methylsulfanyl)pent-1-en-3-one + phosphate. Its pathway is amino-acid biosynthesis; L-methionine biosynthesis via salvage pathway; L-methionine from S-methyl-5-thio-alpha-D-ribose 1-phosphate: step 3/6. It participates in amino-acid biosynthesis; L-methionine biosynthesis via salvage pathway; L-methionine from S-methyl-5-thio-alpha-D-ribose 1-phosphate: step 4/6. In terms of biological role, bifunctional enzyme that catalyzes the enolization of 2,3-diketo-5-methylthiopentyl-1-phosphate (DK-MTP-1-P) into the intermediate 2-hydroxy-3-keto-5-methylthiopentenyl-1-phosphate (HK-MTPenyl-1-P), which is then dephosphorylated to form the acireductone 1,2-dihydroxy-3-keto-5-methylthiopentene (DHK-MTPene). This chain is Enolase-phosphatase E1, found in Kluyveromyces lactis (strain ATCC 8585 / CBS 2359 / DSM 70799 / NBRC 1267 / NRRL Y-1140 / WM37) (Yeast).